Reading from the N-terminus, the 118-residue chain is RNA guanine-N7 methyltransferase activating subunit (118 aa).

Position 2 is an N-acetylthreonine (threonine 2). The tract at residues 2–55 is interaction with RNMT; the sequence is TDTAEAVPNFEEMFASRFTENDKEYQEYLKRPPESPPIVEEWNSRAGGNQRNRG. The interval 30–118 is disordered; that stretch reads LKRPPESPPI…YNQRPPYGYY (89 aa). Serine 36 bears the Phosphoserine mark. The short motif at 36–42 is the RNMT-activating domain element; it reads SPPIVEE. A compositionally biased stretch (low complexity) spans 45–56; sequence SRAGGNQRNRGN. The segment at 56 to 118 is RNA-binding; the sequence is NRLQDNRQFR…YNQRPPYGYY (63 aa). Residues 57–70 are compositionally biased toward basic and acidic residues; that stretch reads RLQDNRQFRGRDNR. Polar residues predominate over residues 76-93; that stretch reads DNRSNQWHGRSWGNNYPQ. Arginine 85 carries the omega-N-methylarginine modification. A Phosphoserine modification is found at serine 86. Residues 98-109 are compositionally biased toward low complexity; that stretch reads PYYPQQYGHYGY.

The protein belongs to the RAM family. As to quaternary structure, interacts with RNMT; this interaction enhances mRNA binding and cap methyltransferase activity.

Its subcellular location is the nucleus. In terms of biological role, regulatory subunit of the mRNA-capping methyltransferase RNMT:RAMAC complex that methylates the N7 position of the added guanosine to the 5'-cap structure of mRNAs. Promotes the recruitment of the methyl donor, S-adenosyl-L-methionine, to RNMT. Regulates RNMT expression by a post-transcriptional stabilizing mechanism. Binds RNA. In Pongo abelii (Sumatran orangutan), this protein is RNA guanine-N7 methyltransferase activating subunit (RAMAC).